We begin with the raw amino-acid sequence, 130 residues long: MSGRGKQGGKARAKAKTRSSRAGLQFPVGRVHRLLRKGNYSERVGAGAPVYLAAVLEYLTAEILELAGNAARDNKKTRIIPRHLQLAIRNDEELNKLLGRVTIAQGGVLPNIQAVLLPKKTETHHKAKGK.

The tract at residues 1–22 is disordered; it reads MSGRGKQGGKARAKAKTRSSRA. Residue Ser2 is modified to N-acetylserine. Position 2 is a phosphoserine; by RPS6KA5 (Ser2). Citrulline; alternate is present on Arg4. Arg4 carries the symmetric dimethylarginine; by PRMT5; alternate modification. 2 positions are modified to N6-(2-hydroxyisobutyryl)lysine; alternate: Lys6 and Lys10. An N6-(beta-hydroxybutyryl)lysine; alternate modification is found at Lys6. An N6-acetyllysine; alternate mark is found at Lys6 and Lys10. Residues 7–19 are compositionally biased toward basic residues; that stretch reads QGGKARAKAKTRS. The residue at position 10 (Lys10) is an N6-lactoyllysine; alternate. Position 10 is an N6-succinyllysine; alternate (Lys10). Glycyl lysine isopeptide (Lys-Gly) (interchain with G-Cter in ubiquitin) cross-links involve residues Lys14 and Lys16. An N6-(2-hydroxyisobutyryl)lysine; alternate modification is found at Lys37. Lys37 bears the N6-(beta-hydroxybutyryl)lysine; alternate mark. Lys37 bears the N6-crotonyllysine; alternate mark. Residues Lys75 and Lys76 each carry the N6-(2-hydroxyisobutyryl)lysine modification. The residue at position 96 (Lys96) is an N6-(2-hydroxyisobutyryl)lysine; alternate. Lys96 carries the post-translational modification N6-succinyllysine; alternate. Position 96 is an N6-glutaryllysine; alternate (Lys96). An N5-methylglutamine modification is found at Gln105. Lys119 bears the N6-(2-hydroxyisobutyryl)lysine; alternate mark. Lys119 and Lys120 each carry N6-crotonyllysine; alternate. An N6-glutaryllysine; alternate mark is found at Lys119 and Lys120. Position 120 is an N6-(beta-hydroxybutyryl)lysine; alternate (Lys120). Lys120 participates in a covalent cross-link: Glycyl lysine isopeptide (Lys-Gly) (interchain with G-Cter in ubiquitin); alternate. Position 121 is a phosphothreonine; by DCAF1 (Thr121). Lys126 carries the post-translational modification N6-(beta-hydroxybutyryl)lysine; alternate. Lys126 is modified (N6-crotonyllysine; alternate). Lys126 carries the N6-glutaryllysine; alternate modification.

The protein belongs to the histone H2A family. As to quaternary structure, the nucleosome is a histone octamer containing two molecules each of H2A, H2B, H3 and H4 assembled in one H3-H4 heterotetramer and two H2A-H2B heterodimers. The octamer wraps approximately 147 bp of DNA. Post-translationally, deiminated on Arg-4 in granulocytes upon calcium entry. In terms of processing, monoubiquitination of Lys-120 (H2AK119Ub) by RING1, TRIM37 and RNF2/RING2 complex gives a specific tag for epigenetic transcriptional repression and participates in X chromosome inactivation of female mammals. It is involved in the initiation of both imprinted and random X inactivation. Ubiquitinated H2A is enriched in inactive X chromosome chromatin. Ubiquitination of H2A functions downstream of methylation of 'Lys-27' of histone H3 (H3K27me). H2AK119Ub by RNF2/RING2 can also be induced by ultraviolet and may be involved in DNA repair. Following DNA double-strand breaks (DSBs), it is ubiquitinated through 'Lys-63' linkage of ubiquitin moieties by the E2 ligase UBE2N and the E3 ligases RNF8 and RNF168, leading to the recruitment of repair proteins to sites of DNA damage. Ubiquitination at Lys-14 and Lys-16 (H2AK13Ub and H2AK15Ub, respectively) in response to DNA damage is initiated by RNF168 that mediates monoubiquitination at these 2 sites, and 'Lys-63'-linked ubiquitin are then conjugated to monoubiquitin; RNF8 is able to extend 'Lys-63'-linked ubiquitin chains in vitro. Deubiquitinated by USP51 at Lys-14 and Lys-16 (H2AK13Ub and H2AK15Ub, respectively) after damaged DNA is repaired. H2AK119Ub and ionizing radiation-induced 'Lys-63'-linked ubiquitination (H2AK13Ub and H2AK15Ub) are distinct events. Phosphorylation on Ser-2 (H2AS1ph) is enhanced during mitosis. Phosphorylation on Ser-2 by RPS6KA5/MSK1 directly represses transcription. Acetylation of H3 inhibits Ser-2 phosphorylation by RPS6KA5/MSK1. Phosphorylation at Thr-121 (H2AT120ph) by DCAF1 is present in the regulatory region of many tumor suppresor genes and down-regulates their transcription. Post-translationally, symmetric dimethylation on Arg-4 by the PRDM1/PRMT5 complex may play a crucial role in the germ-cell lineage. In terms of processing, glutamine methylation at Gln-105 (H2AQ104me) by FBL is specifically dedicated to polymerase I. It is present at 35S ribosomal DNA locus and impairs binding of the FACT complex. Crotonylation (Kcr) is specifically present in male germ cells and marks testis-specific genes in post-meiotic cells, including X-linked genes that escape sex chromosome inactivation in haploid cells. Crotonylation marks active promoters and enhancers and confers resistance to transcriptional repressors. It is also associated with post-meiotically activated genes on autosomes. Post-translationally, hydroxybutyrylation of histones is induced by starvation. In terms of processing, lactylated in macrophages by EP300/P300 by using lactoyl-CoA directly derived from endogenous or exogenous lactate, leading to stimulates gene transcription.

Its subcellular location is the nucleus. The protein resides in the chromosome. Its function is as follows. Core component of nucleosome. Nucleosomes wrap and compact DNA into chromatin, limiting DNA accessibility to the cellular machineries which require DNA as a template. Histones thereby play a central role in transcription regulation, DNA repair, DNA replication and chromosomal stability. DNA accessibility is regulated via a complex set of post-translational modifications of histones, also called histone code, and nucleosome remodeling. This chain is Histone H2A type 1-K, found in Mus musculus (Mouse).